Reading from the N-terminus, the 398-residue chain is MAESAFSERIVQNLLDTDFYKLTMMQAVLHNYPNAEVEWEFRCRNQEDLRLYLPAIREQLEYLAGLAISDEQLAFLERIPFLAPDFIRFLGLFRFNPRYVQTGIENDEFFLRLKGPWLHVILFEVPLLAMISEVRNRARYPAATVEQARERLQEKFDWLRREASAEELAGFKMADFGTRRRFSYRVHEAVVSGLKEDFPGCFVGTSNVHLARKLDLKPLGTMAHEWLMAHQQLGPRLIDSQSAALDCWVREYRGLLGIALTDCITTDAFLRDFDLYFAKLFDGLRHDSGDPLLWAEKTIAHYLKLGIDPLTKTLVFSDGLDLPRALKIYRALQGRINVSFGIGTHFTCDLPGVEPMNIVVKMSACNGHPVAKISDTPGKAQCRDPDFIHYLKHVFQVA.

At His-224 the chain carries Phosphohistidine; by autocatalysis.

This sequence belongs to the NAPRTase family. Post-translationally, transiently phosphorylated on a His residue during the reaction cycle. Phosphorylation strongly increases the affinity for substrates and increases the rate of nicotinate D-ribonucleotide production. Dephosphorylation regenerates the low-affinity form of the enzyme, leading to product release.

It carries out the reaction nicotinate + 5-phospho-alpha-D-ribose 1-diphosphate + ATP + H2O = nicotinate beta-D-ribonucleotide + ADP + phosphate + diphosphate. It functions in the pathway cofactor biosynthesis; NAD(+) biosynthesis; nicotinate D-ribonucleotide from nicotinate: step 1/1. In terms of biological role, catalyzes the synthesis of beta-nicotinate D-ribonucleotide from nicotinate and 5-phospho-D-ribose 1-phosphate at the expense of ATP. The protein is Nicotinate phosphoribosyltransferase 2 of Pseudomonas aeruginosa (strain ATCC 15692 / DSM 22644 / CIP 104116 / JCM 14847 / LMG 12228 / 1C / PRS 101 / PAO1).